A 289-amino-acid polypeptide reads, in one-letter code: E3 ubiquitin-protein ligase MARCHF8 (289 aa).

Residues 1 to 68 (MNMPLHQISA…SAPVSSFPRT (68 aa)) form a disordered region. Positions 25-39 (KTKEKEREEQNEKTL) are enriched in basic and acidic residues. Over residues 50-64 (SKAGGSSVASAPVSS) the composition is skewed to low complexity. The RING-CH-type zinc-finger motif lies at 70-131 (VTPSNQDICR…ELCKYEFIME (62 aa)). Positions 78, 81, 95, 97, 105, 108, 121, and 124 each coordinate Zn(2+). The next 2 membrane-spanning stretches (helical) occupy residues 155–175 (CSVT…YVLI) and 195–215 (FWTK…FMYV).

Interacts with CD86.

It localises to the golgi apparatus membrane. The protein localises to the endoplasmic reticulum membrane. It is found in the cytoplasmic vesicle membrane. The protein resides in the lysosome membrane. Its subcellular location is the early endosome membrane. It catalyses the reaction S-ubiquitinyl-[E2 ubiquitin-conjugating enzyme]-L-cysteine + [acceptor protein]-L-lysine = [E2 ubiquitin-conjugating enzyme]-L-cysteine + N(6)-ubiquitinyl-[acceptor protein]-L-lysine.. It participates in protein modification; protein ubiquitination. Functionally, E3 ubiquitin-protein ligase that plays several important roles in innate immunity and adaptive immunity. Mediates ubiquitination of CD86 and MHC class II proteins, such as HLA-DR alpha and beta, and promotes their subsequent endocytosis and sorting to lysosomes via multivesicular bodies. Possesses a very broad antiviral activity by specifically inactivating different viral fusion proteins. Targets and ubiquitinates cytoplasmic lysine residues of viral envelope glycoproteins with single transmembrane domains leading to their lysosomal degradation. Mediates the regulation of constitutive ubiquitination and trafficking of the viral restriction factor BST2 within the endocytic pathway. Plays a role in maintenance of immune tolerance to self by promoting the turnover and proteasomal degradation of PD-L1/CD274 via ubiquitination. Catalyzes the 'Lys-63'-linked polyubiquitylation of cGAS thereby inhibiting its DNA binding ability and impairing its antiviral innate immunity. Negatively regulates IL7-mediated T-cell homeostasis by mediating 'Lys-27'-linked polyubiquitination of IL7R, leading to its lysosomal degradation. The sequence is that of E3 ubiquitin-protein ligase MARCHF8 (MARCHF8) from Bos taurus (Bovine).